A 356-amino-acid polypeptide reads, in one-letter code: Red-sensitive opsin-2 (356 aa).

Over 1-48 (MAEWANAAFAARRRGDETTRDNAFSYTNSNNTRDPFEGPNYHIAPRWV) the chain is Extracellular. N-linked (GlcNAc...) asparagine glycosylation occurs at Asn-30. Residues 49–73 (YNVATVWMFFVVVASTFTNGLVLVA) traverse the membrane as a helical segment. The Cytoplasmic portion of the chain corresponds to 74-85 (TAKFKKLRHPLN). The chain crosses the membrane as a helical span at residues 86–111 (WILVNLAIADLGETLFASTISVINQV). Residues 112–125 (FGYFILGHPMCIFE) are Extracellular-facing. Cys-122 and Cys-199 are oxidised to a cystine. A helical transmembrane segment spans residues 126 to 145 (GYTVSVCGIAGLWSLTVISW). Over 146-164 (ERWVVVCKPFGNVKFDGKW) the chain is Cytoplasmic. A helical transmembrane segment spans residues 165–188 (ASAGIIFSWVWAAVWCAPPIFGWS). Topologically, residues 189-214 (RYWPHGLKTSCGPDVFGGNEDPGVQS) are extracellular. The chain crosses the membrane as a helical span at residues 215–242 (YMLVLMITCCILPLAIIILCYIAVFLAI). The Cytoplasmic segment spans residues 243–264 (HAVAQQQKDSESTQKAEKEVSR). A helical membrane pass occupies residues 265-288 (MVVVMILAFCLCWGPYTAFACFAA). The Extracellular segment spans residues 289–296 (ANPGYAFH). A helical membrane pass occupies residues 297–321 (PLAAAMPAYFAKSATIYNPIIYVFM). Lys-308 carries the post-translational modification N6-(retinylidene)lysine. At 322 to 356 (NRQFRVCIMQLFGKKVDDGSEVSTSKTEVSSVAPA) the chain is on the cytoplasmic side.

Belongs to the G-protein coupled receptor 1 family. Opsin subfamily. In terms of processing, phosphorylated on some or all of the serine and threonine residues present in the C-terminal region.

It is found in the membrane. Its function is as follows. Visual pigments are the light-absorbing molecules that mediate vision. They consist of an apoprotein, opsin, covalently linked to cis-retinal. The protein is Red-sensitive opsin-2 (opn1lw2) of Danio rerio (Zebrafish).